A 301-amino-acid chain; its full sequence is D-alanine--D-alanine ligase (301 aa).

The 196-residue stretch at 99 to 294 (KCILKAANIR…FPELIDMIID (196 aa)) folds into the ATP-grasp domain. 126-181 (IEKMGYPVVVKPTHGGSSVATFIIKEEKDIKDAVIEGFKWDSEVIIEKFIKGDEIT) contacts ATP. 3 residues coordinate Mg(2+): D248, E261, and N263.

It belongs to the D-alanine--D-alanine ligase family. Mg(2+) is required as a cofactor. It depends on Mn(2+) as a cofactor.

It localises to the cytoplasm. It catalyses the reaction 2 D-alanine + ATP = D-alanyl-D-alanine + ADP + phosphate + H(+). Its pathway is cell wall biogenesis; peptidoglycan biosynthesis. In terms of biological role, cell wall formation. The polypeptide is D-alanine--D-alanine ligase (Clostridium botulinum (strain Alaska E43 / Type E3)).